The primary structure comprises 401 residues: 3-hydroxyisobutyryl-CoA hydrolase-like protein 1, mitochondrial (401 aa).

The N-terminal 26 residues, 1-26 (MHNAKGLLGRIVRDKLWRFGYRRSLC), are a transit peptide targeting the mitochondrion.

The protein belongs to the enoyl-CoA hydratase/isomerase family.

The protein resides in the mitochondrion. The chain is 3-hydroxyisobutyryl-CoA hydrolase-like protein 1, mitochondrial from Arabidopsis thaliana (Mouse-ear cress).